Consider the following 481-residue polypeptide: Glutamate--tRNA ligase (481 aa).

The 'HIGH' region signature appears at 9-19; the sequence is PSPTGNLHIGT. Positions 249–253 match the 'KMSKS' region motif; sequence KLSKR. ATP is bound at residue Lys-252.

Belongs to the class-I aminoacyl-tRNA synthetase family. Glutamate--tRNA ligase type 1 subfamily. Monomer.

The protein resides in the cytoplasm. The catalysed reaction is tRNA(Glu) + L-glutamate + ATP = L-glutamyl-tRNA(Glu) + AMP + diphosphate. Its function is as follows. Catalyzes the attachment of glutamate to tRNA(Glu) in a two-step reaction: glutamate is first activated by ATP to form Glu-AMP and then transferred to the acceptor end of tRNA(Glu). The sequence is that of Glutamate--tRNA ligase from Picosynechococcus sp. (strain ATCC 27264 / PCC 7002 / PR-6) (Agmenellum quadruplicatum).